A 483-amino-acid polypeptide reads, in one-letter code: Glutamyl-tRNA(Gln) amidotransferase subunit A (483 aa).

Catalysis depends on charge relay system residues K76 and S151. The active-site Acyl-ester intermediate is the S175.

Belongs to the amidase family. GatA subfamily. As to quaternary structure, heterotrimer of A, B and C subunits.

It carries out the reaction L-glutamyl-tRNA(Gln) + L-glutamine + ATP + H2O = L-glutaminyl-tRNA(Gln) + L-glutamate + ADP + phosphate + H(+). Functionally, allows the formation of correctly charged Gln-tRNA(Gln) through the transamidation of misacylated Glu-tRNA(Gln) in organisms which lack glutaminyl-tRNA synthetase. The reaction takes place in the presence of glutamine and ATP through an activated gamma-phospho-Glu-tRNA(Gln). The protein is Glutamyl-tRNA(Gln) amidotransferase subunit A of Ectopseudomonas mendocina (strain ymp) (Pseudomonas mendocina).